A 480-amino-acid polypeptide reads, in one-letter code: Probable E3 ubiquitin protein ligase DRIPH (480 aa).

The RING-type zinc-finger motif lies at 16-57; it reads CPICTNPFKDATTISECLHTFCRSCIRNKFINERVNACPVCN. 4 disordered regions span residues 93–133, 167–193, 241–261, and 280–356; these read GPKT…EPAN, RGRK…PKIK, TPPD…ESVE, and VNQN…EMKV. Residues 103-112 show a composition bias toward basic residues; that stretch reads SSKKKRKSRT. Positions 113-133 are enriched in low complexity; it reads SLRVSSSRVSSSPDTPLEPAN. The span at 175-193 shows a compositional bias: basic and acidic residues; that stretch reads KKIDSKPEPELPPKEPKIK. Over residues 246–260 the composition is skewed to acidic residues; sequence VEPEISSDDDTEESV. Positions 298–309 are enriched in polar residues; sequence GQKLKTNGAATS.

It carries out the reaction S-ubiquitinyl-[E2 ubiquitin-conjugating enzyme]-L-cysteine + [acceptor protein]-L-lysine = [E2 ubiquitin-conjugating enzyme]-L-cysteine + N(6)-ubiquitinyl-[acceptor protein]-L-lysine.. It functions in the pathway protein modification; protein ubiquitination. In Arabidopsis thaliana (Mouse-ear cress), this protein is Probable E3 ubiquitin protein ligase DRIPH.